The chain runs to 291 residues: RPE-retinal G protein-coupled receptor (291 aa).

The Extracellular segment spans residues 1 to 15 (MAESGTLPTGFGELE). A helical membrane pass occupies residues 16–36 (VLAVGTVLLVEALSGLSLNIL). Over 37 to 52 (TILSFCKTPELRTPSH) the chain is Cytoplasmic. A helical membrane pass occupies residues 53 to 73 (LLVLSLALADSGISLNALVAA). Residues 74–91 (TSSLLRRWPYGSEGCQAH) lie on the Extracellular side of the membrane. A disulfide bridge links Cys-88 with Cys-162. The chain crosses the membrane as a helical span at residues 92–112 (GFQGFVTALASICSSAAVAWG). The Cytoplasmic segment spans residues 113 to 130 (RYHHFCTRSRLDWNTAVS). A helical membrane pass occupies residues 131 to 151 (LVFFVWLSSAFWAALPLLGWG). The Extracellular portion of the chain corresponds to 152–175 (HYDYEPLGTCCTLDYSRGDRNFTS). The N-linked (GlcNAc...) asparagine glycan is linked to Asn-172. A helical transmembrane segment spans residues 176–196 (FLFTMAFFNFLLPLFITVVSY). Residues 197–219 (RLMEQKLGKTSRPPVNTVLPART) lie on the Cytoplasmic side of the membrane. A helical transmembrane segment spans residues 220–240 (LLLGWGPYALLYLYATIADAT). Topologically, residues 241–247 (SISPKLQ) are extracellular. The helical transmembrane segment at 248–268 (MVPALIAKAVPTVNAMNYALG) threads the bilayer. Position 255 is an N6-(retinylidene)lysine (Lys-255). The Cytoplasmic portion of the chain corresponds to 269–291 (SEMVHRGIWQCLSPQRREHSREQ).

This sequence belongs to the G-protein coupled receptor 1 family. Opsin subfamily. Post-translationally, covalently binds all-trans- and 11-cis-retinal. Preferentially expressed at high levels in the retinal pigment epithelium (RPE) and Mueller cells of the neural retina.

It localises to the membrane. In terms of biological role, receptor for all-trans- and 11-cis-retinal. Binds preferentially to the former and may catalyze the isomerization of the chromophore by a retinochrome-like mechanism. The polypeptide is RPE-retinal G protein-coupled receptor (RGR) (Bos taurus (Bovine)).